Reading from the N-terminus, the 241-residue chain is Phosphoadenosine 5'-phosphosulfate reductase (241 aa).

Cys-235 (nucleophile; cysteine thiosulfonate intermediate) is an active-site residue.

The protein belongs to the PAPS reductase family. CysH subfamily.

Its subcellular location is the cytoplasm. The enzyme catalyses [thioredoxin]-disulfide + sulfite + adenosine 3',5'-bisphosphate + 2 H(+) = [thioredoxin]-dithiol + 3'-phosphoadenylyl sulfate. It functions in the pathway sulfur metabolism; hydrogen sulfide biosynthesis; sulfite from sulfate: step 3/3. In terms of biological role, catalyzes the formation of sulfite from phosphoadenosine 5'-phosphosulfate (PAPS) using thioredoxin as an electron donor. This chain is Phosphoadenosine 5'-phosphosulfate reductase, found in Xanthomonas campestris pv. campestris (strain 8004).